The primary structure comprises 308 residues: Cytochrome b (308 aa).

4 consecutive transmembrane segments (helical) span residues 1–21 (FGSLLGICLMTQIITGLLLAM), 45–66 (WLIRNLHANGASFFFICIYLHI), 81–101 (WNIGVILLLTLMATAFVGYVL), and 146–166 (FFALHFLLHFIIAGLTFIHLT). 2 residues coordinate heme b: His-51 and His-65. Positions 150 and 164 each coordinate heme b. Residue His-169 coordinates a ubiquinone. The next 3 membrane-spanning stretches (helical) occupy residues 194–214 (TKDALGFILLLFPLMTLAMFS), 256–276 (LGGVLALAASVLILLLIPLLH), and 288–308 (LSQFLFWTLVMNLLILTWIGS).

It belongs to the cytochrome b family. In terms of assembly, the cytochrome bc1 complex contains 11 subunits: 3 respiratory subunits (MT-CYB, CYC1 and UQCRFS1), 2 core proteins (UQCRC1 and UQCRC2) and 6 low-molecular weight proteins (UQCRH/QCR6, UQCRB/QCR7, UQCRQ/QCR8, UQCR10/QCR9, UQCR11/QCR10 and a cleavage product of UQCRFS1). This cytochrome bc1 complex then forms a dimer. Requires heme b as cofactor.

The protein localises to the mitochondrion inner membrane. Functionally, component of the ubiquinol-cytochrome c reductase complex (complex III or cytochrome b-c1 complex) that is part of the mitochondrial respiratory chain. The b-c1 complex mediates electron transfer from ubiquinol to cytochrome c. Contributes to the generation of a proton gradient across the mitochondrial membrane that is then used for ATP synthesis. The polypeptide is Cytochrome b (MT-CYB) (Zaratornis stresemanni (White-cheeked cotinga)).